Consider the following 127-residue polypeptide: Glycine cleavage system H protein (127 aa).

Residues 23–105 form the Lipoyl-binding domain; sequence KVSVGITDFA…YGEGWIAVIE (83 aa). An N6-lipoyllysine modification is found at lysine 64.

It belongs to the GcvH family. In terms of assembly, the glycine cleavage system is composed of four proteins: P, T, L and H. Requires (R)-lipoate as cofactor.

Functionally, the glycine cleavage system catalyzes the degradation of glycine. The H protein shuttles the methylamine group of glycine from the P protein to the T protein. The sequence is that of Glycine cleavage system H protein from Coprothermobacter proteolyticus (strain ATCC 35245 / DSM 5265 / OCM 4 / BT).